The sequence spans 289 residues: MKKLSFQQIILTLQNYWQDYGCAILQPYDAHVGAGTFHPATVLRCLGSKPWSVAYVQPSRRPGDSRYGMHPNRMQHYYQFQVILKPSPDNIQELYLKSLECLGIDLKAHDIRFVEDDWKSPTLGAAGLGWEVWCDGMEVSQFTYMQQIGGIECKLVAGEITYGLERLALYIQGIDEVKELDWNGQTGEKALKYGEVDFEAERQFSKFNLEFADSEMLLRHFKDSEEQCERLVEANLPLPAYDYCLNASHYFNLLNSRGIISVTERASYVLKVRHLAKICCMKWLEMSGE.

Belongs to the class-II aminoacyl-tRNA synthetase family. As to quaternary structure, tetramer of two alpha and two beta subunits.

It localises to the cytoplasm. The enzyme catalyses tRNA(Gly) + glycine + ATP = glycyl-tRNA(Gly) + AMP + diphosphate. The sequence is that of Glycine--tRNA ligase alpha subunit from Rickettsia bellii (strain OSU 85-389).